The chain runs to 485 residues: Aspartyl/glutamyl-tRNA(Asn/Gln) amidotransferase subunit B (485 aa).

It belongs to the GatB/GatE family. GatB subfamily. As to quaternary structure, heterotrimer of A, B and C subunits.

The catalysed reaction is L-glutamyl-tRNA(Gln) + L-glutamine + ATP + H2O = L-glutaminyl-tRNA(Gln) + L-glutamate + ADP + phosphate + H(+). It catalyses the reaction L-aspartyl-tRNA(Asn) + L-glutamine + ATP + H2O = L-asparaginyl-tRNA(Asn) + L-glutamate + ADP + phosphate + 2 H(+). Functionally, allows the formation of correctly charged Asn-tRNA(Asn) or Gln-tRNA(Gln) through the transamidation of misacylated Asp-tRNA(Asn) or Glu-tRNA(Gln) in organisms which lack either or both of asparaginyl-tRNA or glutaminyl-tRNA synthetases. The reaction takes place in the presence of glutamine and ATP through an activated phospho-Asp-tRNA(Asn) or phospho-Glu-tRNA(Gln). This Borrelia turicatae (strain 91E135) protein is Aspartyl/glutamyl-tRNA(Asn/Gln) amidotransferase subunit B.